Consider the following 87-residue polypeptide: Small ribosomal subunit protein uS17 (87 aa).

The protein belongs to the universal ribosomal protein uS17 family. As to quaternary structure, part of the 30S ribosomal subunit.

Its function is as follows. One of the primary rRNA binding proteins, it binds specifically to the 5'-end of 16S ribosomal RNA. The sequence is that of Small ribosomal subunit protein uS17 from Bacillus subtilis (strain 168).